Consider the following 333-residue polypeptide: tRNA N6-adenosine threonylcarbamoyltransferase (333 aa).

Fe cation-binding residues include H111 and H115. Residues 134–138 (LVSGG), D167, G180, and N272 contribute to the substrate site. A Fe cation-binding site is contributed by D300.

The protein belongs to the KAE1 / TsaD family. Fe(2+) is required as a cofactor.

It localises to the cytoplasm. It catalyses the reaction L-threonylcarbamoyladenylate + adenosine(37) in tRNA = N(6)-L-threonylcarbamoyladenosine(37) in tRNA + AMP + H(+). In terms of biological role, required for the formation of a threonylcarbamoyl group on adenosine at position 37 (t(6)A37) in tRNAs that read codons beginning with adenine. Is involved in the transfer of the threonylcarbamoyl moiety of threonylcarbamoyl-AMP (TC-AMP) to the N6 group of A37, together with TsaE and TsaB. TsaD likely plays a direct catalytic role in this reaction. The chain is tRNA N6-adenosine threonylcarbamoyltransferase from Legionella pneumophila (strain Corby).